Consider the following 242-residue polypeptide: Adapter protein MecA (242 aa).

The protein belongs to the MecA family. Homodimer.

Enables the recognition and targeting of unfolded and aggregated proteins to the ClpC protease or to other proteins involved in proteolysis. The sequence is that of Adapter protein MecA from Streptococcus gordonii (strain Challis / ATCC 35105 / BCRC 15272 / CH1 / DL1 / V288).